The following is a 233-amino-acid chain: Large ribosomal subunit protein uL1 (233 aa).

Belongs to the universal ribosomal protein uL1 family. Part of the 50S ribosomal subunit.

In terms of biological role, binds directly to 23S rRNA. The L1 stalk is quite mobile in the ribosome, and is involved in E site tRNA release. Protein L1 is also a translational repressor protein, it controls the translation of the L11 operon by binding to its mRNA. The chain is Large ribosomal subunit protein uL1 from Brucella melitensis biotype 1 (strain ATCC 23456 / CCUG 17765 / NCTC 10094 / 16M).